The chain runs to 78 residues: Large ribosomal subunit protein bL28 (78 aa).

Residues 1–20 (MSRVCQVTGKGPVTGNNISH) are disordered.

The protein belongs to the bacterial ribosomal protein bL28 family.

This chain is Large ribosomal subunit protein bL28, found in Azotobacter vinelandii (strain DJ / ATCC BAA-1303).